Reading from the N-terminus, the 335-residue chain is Delta(7)-sterol 5(6)-desaturase erg3B (335 aa).

3 helical membrane passes run 74–94 (IWAF…ALVF), 113–133 (IGQA…LFLA), and 152–172 (LYTY…IYWI). The 125-residue stretch at 160–284 (LFIAFTDFAI…FITFWDRIGG (125 aa)) folds into the Fatty acid hydroxylase domain. Residues 173–177 (HRGLH) carry the Histidine box-1 motif. A Histidine box-2 motif is present at residues 186–190 (HKPHH). The helical transmembrane segment at 219–239 (PFLFPLQKAAYLGLFVFVTIW) threads the bilayer. Asn256 is a glycosylation site (N-linked (GlcNAc...) asparagine). Residues 261-265 (HTIHH) carry the Histidine box-3 motif.

The protein belongs to the sterol desaturase family. Requires Fe cation as cofactor.

The protein resides in the endoplasmic reticulum membrane. It participates in steroid metabolism; ergosterol biosynthesis. Functionally, delta(7)-sterol 5(6)-desaturase; part of the third module of ergosterol biosynthesis pathway that includes the late steps of the pathway. Erg3B catalyzes the introduction of a C-5 double bond in the B ring to produce 5-dehydroepisterol. The third module or late pathway involves the ergosterol synthesis itself through consecutive reactions that mainly occur in the endoplasmic reticulum (ER) membrane. Firstly, the squalene synthase erg9 catalyzes the condensation of 2 farnesyl pyrophosphate moieties to form squalene, which is the precursor of all steroids. Squalene synthase is crucial for balancing the incorporation of farnesyl diphosphate (FPP) into sterol and nonsterol isoprene synthesis. Secondly, squalene is converted into lanosterol by the consecutive action of the squalene epoxidase erg1 and the lanosterol synthase erg7. Then, the delta(24)-sterol C-methyltransferase erg6 methylates lanosterol at C-24 to produce eburicol. Eburicol is the substrate of the sterol 14-alpha demethylase encoded by cyp51A and cyp51B, to yield 4,4,24-trimethyl ergosta-8,14,24(28)-trienol. The C-14 reductase erg24 then reduces the C14=C15 double bond which leads to 4,4-dimethylfecosterol. A sequence of further demethylations at C-4, involving the C-4 demethylation complex containing the C-4 methylsterol oxidases erg25A or erg25B, the sterol-4-alpha-carboxylate 3-dehydrogenase erg26 and the 3-keto-steroid reductase erg27, leads to the production of fecosterol via 4-methylfecosterol. The C-8 sterol isomerase erg2 then catalyzes the reaction which results in unsaturation at C-7 in the B ring of sterols and thus converts fecosterol to episterol. The sterol-C5-desaturase erg3B then catalyzes the introduction of a C-5 double bond in the B ring to produce 5-dehydroepisterol. The 2 other sterol-C5-desaturases, erg3A and erg3C, seem to be less important in ergosterol biosynthesis. The C-22 sterol desaturase erg5 further converts 5-dehydroepisterol into ergosta-5,7,22,24(28)-tetraen-3beta-ol by forming the C-22(23) double bond in the sterol side chain. Finally, ergosta-5,7,22,24(28)-tetraen-3beta-ol is substrate of the C-24(28) sterol reductases erg4A and erg4B to produce ergosterol. Possible alternative sterol biosynthetic pathways might exist from fecosterol to ergosterol, depending on the activities of the erg3 isoforms. This Aspergillus fumigatus (strain ATCC MYA-4609 / CBS 101355 / FGSC A1100 / Af293) (Neosartorya fumigata) protein is Delta(7)-sterol 5(6)-desaturase erg3B.